A 303-amino-acid chain; its full sequence is Methionyl-tRNA formyltransferase (303 aa).

110–113 (SLLP) contacts (6S)-5,6,7,8-tetrahydrofolate.

The protein belongs to the Fmt family.

The catalysed reaction is L-methionyl-tRNA(fMet) + (6R)-10-formyltetrahydrofolate = N-formyl-L-methionyl-tRNA(fMet) + (6S)-5,6,7,8-tetrahydrofolate + H(+). In terms of biological role, attaches a formyl group to the free amino group of methionyl-tRNA(fMet). The formyl group appears to play a dual role in the initiator identity of N-formylmethionyl-tRNA by promoting its recognition by IF2 and preventing the misappropriation of this tRNA by the elongation apparatus. This Ehrlichia ruminantium (strain Gardel) protein is Methionyl-tRNA formyltransferase.